The chain runs to 273 residues: Dermonecrotic toxin LsaSicTox-alphaIB1bii (273 aa).

The active site involves H5. Residues E25 and D27 each coordinate Mg(2+). Catalysis depends on H41, which acts as the Nucleophile. 2 disulfide bridges follow: C45–C51 and C47–C190. Mg(2+) is bound at residue D85.

It belongs to the arthropod phospholipase D family. Class II subfamily. Mg(2+) serves as cofactor. Expressed by the venom gland.

It localises to the secreted. It catalyses the reaction an N-(acyl)-sphingosylphosphocholine = an N-(acyl)-sphingosyl-1,3-cyclic phosphate + choline. The enzyme catalyses an N-(acyl)-sphingosylphosphoethanolamine = an N-(acyl)-sphingosyl-1,3-cyclic phosphate + ethanolamine. The catalysed reaction is a 1-acyl-sn-glycero-3-phosphocholine = a 1-acyl-sn-glycero-2,3-cyclic phosphate + choline. It carries out the reaction a 1-acyl-sn-glycero-3-phosphoethanolamine = a 1-acyl-sn-glycero-2,3-cyclic phosphate + ethanolamine. Functionally, dermonecrotic toxins cleave the phosphodiester linkage between the phosphate and headgroup of certain phospholipids (sphingolipid and lysolipid substrates), forming an alcohol (often choline) and a cyclic phosphate. This toxin acts on sphingomyelin (SM). It may also act on ceramide phosphoethanolamine (CPE), lysophosphatidylcholine (LPC) and lysophosphatidylethanolamine (LPE), but not on lysophosphatidylserine (LPS), and lysophosphatidylglycerol (LPG). It acts by transphosphatidylation, releasing exclusively cyclic phosphate products as second products. Induces dermonecrosis, hemolysis, increased vascular permeability, edema, inflammatory response, and platelet aggregation. This Loxosceles sabina (Tucson recluse spider) protein is Dermonecrotic toxin LsaSicTox-alphaIB1bii.